A 295-amino-acid polypeptide reads, in one-letter code: Pyrroline-5-carboxylate reductase (295 aa).

It belongs to the pyrroline-5-carboxylate reductase family.

It localises to the cytoplasm. It catalyses the reaction L-proline + NADP(+) = (S)-1-pyrroline-5-carboxylate + NADPH + 2 H(+). The catalysed reaction is L-proline + NAD(+) = (S)-1-pyrroline-5-carboxylate + NADH + 2 H(+). The protein operates within amino-acid biosynthesis; L-proline biosynthesis; L-proline from L-glutamate 5-semialdehyde: step 1/1. In terms of biological role, catalyzes the reduction of 1-pyrroline-5-carboxylate (PCA) to L-proline. The polypeptide is Pyrroline-5-carboxylate reductase (Mycobacterium tuberculosis (strain CDC 1551 / Oshkosh)).